The chain runs to 371 residues: Alanine racemase (371 aa).

Residue K40 is the Proton acceptor; specific for D-alanine of the active site. K40 carries the N6-(pyridoxal phosphate)lysine modification. R136 contacts substrate. Y263 serves as the catalytic Proton acceptor; specific for L-alanine. A substrate-binding site is contributed by M310.

It belongs to the alanine racemase family. Pyridoxal 5'-phosphate is required as a cofactor.

The enzyme catalyses L-alanine = D-alanine. It participates in amino-acid biosynthesis; D-alanine biosynthesis; D-alanine from L-alanine: step 1/1. Functionally, catalyzes the interconversion of L-alanine and D-alanine. May also act on other amino acids. The protein is Alanine racemase (alr) of Streptococcus mutans serotype c (strain ATCC 700610 / UA159).